Reading from the N-terminus, the 223-residue chain is Glutathione S-transferase U6 (223 aa).

The GST N-terminal domain occupies 5 to 84 (EEVKLLGIWA…YIDETWKHNP (80 aa)). Glutathione contacts are provided by residues 15-16 (SP), 41-42 (NK), 55-56 (KI), and 68-69 (ES). Residues 89 to 216 (DPFQRSKARV…EKHIEHMNNM (128 aa)) enclose the GST C-terminal domain. Residue Thr-150 is modified to Phosphothreonine.

This sequence belongs to the GST superfamily. Tau family.

It is found in the cytoplasm. Its subcellular location is the cytosol. It catalyses the reaction RX + glutathione = an S-substituted glutathione + a halide anion + H(+). Functionally, may be involved in the conjugation of reduced glutathione to a wide number of exogenous and endogenous hydrophobic electrophiles and have a detoxification role against certain herbicides. This is Glutathione S-transferase U6 (GSTU6) from Arabidopsis thaliana (Mouse-ear cress).